Reading from the N-terminus, the 220-residue chain is Fructose-6-phosphate aldolase 2 (220 aa).

K85 acts as the Schiff-base intermediate with substrate in catalysis.

The protein belongs to the transaldolase family. Type 3A subfamily. Homodecamer.

It localises to the cytoplasm. The catalysed reaction is beta-D-fructose 6-phosphate = dihydroxyacetone + D-glyceraldehyde 3-phosphate. In terms of biological role, catalyzes the reversible formation of fructose 6-phosphate from dihydroxyacetone and D-glyceraldehyde 3-phosphate via an aldolization reaction. Can utilize hydroxyacetone as an alternative donor substrate. Is also able to catalyze the direct self-aldol addition of glycolaldehyde. Is less catalytically efficient than the isozyme FsaA. Does not display transaldolase activity. The polypeptide is Fructose-6-phosphate aldolase 2 (fsaB) (Escherichia coli (strain K12)).